The sequence spans 64 residues: Potassium channel toxin kappa-KTx 4.1 (64 aa).

Positions 1 to 26 are cleaved as a signal peptide; that stretch reads MKSTLMTASLLILVVLFIIDYASVYA. Positions 27–38 are excised as a propeptide; sequence EFIDGEISLERE. 2 disulfides stabilise this stretch: Cys-43–Cys-61 and Cys-47–Cys-57.

The protein belongs to the short scorpion toxin superfamily. Potassium channel inhibitor kappa-KTx family. Kappa-KTx 4 subfamily. As to expression, expressed by the venom gland.

The protein localises to the secreted. Functionally, potassium channel inhibitor (Kv). The protein is Potassium channel toxin kappa-KTx 4.1 of Heterometrus petersii (Asian forest scorpion).